The primary structure comprises 300 residues: Tyrosine recombinase XerC (300 aa).

The Core-binding (CB) domain maps to 2–88 (TQEGQLEKRF…SLRSFYTFLL (87 aa)). One can recognise a Tyr recombinase domain in the interval 109-294 (RLPKFFYSEE…TKEHLKSTYM (186 aa)). Catalysis depends on residues Arg150, Lys174, His246, Arg249, and His272. Residue Tyr281 is the O-(3'-phospho-DNA)-tyrosine intermediate of the active site.

The protein belongs to the 'phage' integrase family. XerC subfamily. In terms of assembly, forms a cyclic heterotetrameric complex composed of two molecules of XerC and two molecules of XerD.

Its subcellular location is the cytoplasm. In terms of biological role, site-specific tyrosine recombinase, which acts by catalyzing the cutting and rejoining of the recombining DNA molecules. The XerC-XerD complex is essential to convert dimers of the bacterial chromosome into monomers to permit their segregation at cell division. It also contributes to the segregational stability of plasmids. This Listeria innocua serovar 6a (strain ATCC BAA-680 / CLIP 11262) protein is Tyrosine recombinase XerC.